Here is a 587-residue protein sequence, read N- to C-terminus: Putative inactive receptor-like protein kinase At1g64210 (587 aa).

The N-terminal stretch at 1–19 is a signal peptide; it reads MQIFLFFFSLILCFVLISS. At 20–232 the chain is on the extracellular side; it reads QTLEDDKKAL…KTPFGLSQLA (213 aa). 2 N-linked (GlcNAc...) asparagine glycosylation sites follow: Asn-37 and Asn-44. 5 LRR repeats span residues 89 to 112, 113 to 136, 137 to 160, 161 to 183, and 184 to 205; these read SLKFLSLRKNHFTGDFPSDFTNLK, SLTHLYLQHNHLSGPLLAIFSELK, NLKVLDLSNNGFNGSIPTSLSGLT, SLQVLNLANNSFSGEIPNLHLPK, and LSQINLSNNKLIGTIPKSLQRF. N-linked (GlcNAc...) asparagine glycans are attached at residues Asn-149, Asn-169, Asn-188, and Asn-214. The chain crosses the membrane as a helical span at residues 233 to 253; it reads FLLILSAACVLCVSGLSFIMI. Residues 254–587 lie on the Cytoplasmic side of the membrane; that stretch reads TCFGKTRISG…IEDIRSVDAE (334 aa). Residues 307 to 581 form the Protein kinase domain; the sequence is SSSAEVLGKG…AQVLKLIEDI (275 aa). Ser-309 is subject to Phosphoserine. Residues 313 to 321 and Lys-335 contribute to the ATP site; that span reads LGKGAFGTT. A Phosphoserine modification is found at Ser-386. Phosphothreonine occurs at positions 462, 463, 466, and 477.

Its subcellular location is the cell membrane. The sequence is that of Putative inactive receptor-like protein kinase At1g64210 from Arabidopsis thaliana (Mouse-ear cress).